The primary structure comprises 310 residues: Probable metallo-hydrolase Mb2322c (310 aa).

The segment at 1 to 29 (MVATRGRPCPTNFSRPQRPRVAGNGTKSQ) is disordered. His-137, Asp-139, Asp-141, His-142, His-221, Asp-242, and His-288 together coordinate Zn(2+).

This sequence belongs to the metallo-beta-lactamase superfamily. Zn(2+) is required as a cofactor.

This Mycobacterium bovis (strain ATCC BAA-935 / AF2122/97) protein is Probable metallo-hydrolase Mb2322c.